Consider the following 136-residue polypeptide: Small ribosomal subunit protein uS11c (136 aa).

It belongs to the universal ribosomal protein uS11 family. As to quaternary structure, part of the 30S ribosomal subunit.

Its subcellular location is the plastid. It is found in the chloroplast. The chain is Small ribosomal subunit protein uS11c from Guizotia abyssinica (Niger).